A 207-amino-acid chain; its full sequence is SPRY domain-containing protein 4 (207 aa).

Positions 12–206 (CRWGAKRLGV…THSGLEVPEG (195 aa)) constitute a B30.2/SPRY domain. 2 positions are modified to N6-acetyllysine: Lys-53 and Lys-130. Lys-139 carries the N6-succinyllysine modification.

The chain is SPRY domain-containing protein 4 (SPRYD4) from Homo sapiens (Human).